A 685-amino-acid chain; its full sequence is MKTKRFDAALILILLAAAFLNTYHIWQDDTANQYYLAAVKSMTQSFHNFFYASFDPSGFVTVDKPPVVLWIQTIFALIFGVHTWSVIIPQALAGVGSVFLLYRMVKPTFGVGAARIAALVMALTPIAVAVSRTNNIDSMLVFTLLLGSTCLLRAVKQGKLVWLLTAFALIGLAFNMKMMQAFMVLPAFVLFYLIASRVSLKKKIGSLLLSLVLLTGLSLSWAIAVDSASSSSRPYVGSSQTNSVLELAFGYNGTERLFGQTTGLAKGDMNAAGGGNMQNQDNMQAPNGNGSSFSQNGNQSFGNHSQAPQPPNGQTGALNGGGGTPPTGGNGPGNGGPGGGGGKSVNMFGTGDPGPLRLFQSALSGQISWMLPFSLIGLLGAIISWYRDRRGHAAKMKETLFWAAWLVPVAGFFSIAGFFHQYYLIMLAPPIAALSGIGWYTMHRLYKNNKDWSSYLLPAAVLITAVFQVYILSAYTSQIGSVWMYVLGLLGLGITLALLMLKRSHPFSKLLTIISLCVLLLTPVYWSATPLLYGGNSVLPESGPQLKGSANGGNMFSSEVDSGLLSYLRKHNTGEEYLFATLTTVTAAPYIIYENESVMAMGGFNGTDPILTVSELKKLIKEGKVKYFLLSENNSGNSELVSWIKKNGKEITSDEYSGSSSSTNSVQGMRRGPGGESQQTLYLVE.

The next 6 membrane-spanning stretches (helical) occupy residues 6–26, 68–88, 109–129, 154–174, 176–196, and 204–224; these read FDAA…YHIW, VLWI…SVII, FGVG…IAVA, AVKQ…GLAF, MKMM…LIAS, and IGSL…WAIA. The tract at residues 269–347 is disordered; sequence MNAAGGGNMQ…GGGGGKSVNM (79 aa). A compositionally biased stretch (polar residues) spans 277 to 286; the sequence is MQNQDNMQAP. Residues 287 to 303 show a composition bias toward low complexity; the sequence is NGNGSSFSQNGNQSFGN. The span at 318–343 shows a compositional bias: gly residues; it reads LNGGGGTPPTGGNGPGNGGPGGGGGK. Transmembrane regions (helical) follow at residues 363 to 383, 399 to 419, 422 to 442, 455 to 475, 479 to 499, 513 to 533, and 573 to 593; these read LSGQ…GAII, TLFW…AGFF, YYLI…WYTM, YLLP…LSAY, IGSV…LALL, IISL…PLLY, and TGEE…YIIY. The disordered stretch occupies residues 652-685; sequence TSDEYSGSSSSTNSVQGMRRGPGGESQQTLYLVE. A compositionally biased stretch (low complexity) spans 654 to 665; sequence DEYSGSSSSTNS. Residues 676–685 are compositionally biased toward polar residues; that stretch reads ESQQTLYLVE.

Belongs to the glycosyltransferase 39 family.

Its subcellular location is the cell membrane. This chain is Putative mannosyltransferase YycA (yycA), found in Bacillus subtilis (strain 168).